The following is a 202-amino-acid chain: Protein EMBRYO DEFECTIVE 514 (202 aa).

Disordered regions lie at residues 1 to 69 (MAEE…PVKL) and 168 to 202 (MKTPGANGNGHGGGRGGGGGRRGGRGGGRGGRFRR). Alanine 2 bears the N-acetylalanine mark. 2 stretches are compositionally biased toward basic and acidic residues: residues 33–42 (ETGDEKRERE) and 51–65 (GESKKQKVGEEEKSG). Gly residues predominate over residues 174–202 (NGNGHGGGRGGGGGRRGGRGGGRGGRFRR).

As to expression, expressed in leaves, flowers and embryos at globular stage.

It is found in the nucleus. In terms of biological role, may play a role in ribosome biogenesis and in determining the rate of cell division. Involved in a process essential for nuclear and nucleolar functions. The chain is Protein EMBRYO DEFECTIVE 514 from Arabidopsis thaliana (Mouse-ear cress).